The sequence spans 706 residues: UvrABC system protein C (706 aa).

A GIY-YIG domain is found at 16–95 (VEPGVYRFRD…IKEFDPRFNV (80 aa)). One can recognise a UVR domain in the interval 208-243 (DRLAKDMEQQMTAAAEQLDFERAARLRDDISALKRA). Residues 651–706 (APQNGTAPDPAPGTGDPQTPADPHSAATAADIEDDRHATGATGPQMNGSEQQVDRV) form a disordered region. The span at 692–706 (TGPQMNGSEQQVDRV) shows a compositional bias: polar residues.

This sequence belongs to the UvrC family. As to quaternary structure, interacts with UvrB in an incision complex.

It is found in the cytoplasm. Functionally, the UvrABC repair system catalyzes the recognition and processing of DNA lesions. UvrC both incises the 5' and 3' sides of the lesion. The N-terminal half is responsible for the 3' incision and the C-terminal half is responsible for the 5' incision. In Mycolicibacterium smegmatis (strain ATCC 700084 / mc(2)155) (Mycobacterium smegmatis), this protein is UvrABC system protein C.